A 431-amino-acid chain; its full sequence is Enolase (431 aa).

(2R)-2-phosphoglycerate is bound at residue Q163. E205 (proton donor) is an active-site residue. Mg(2+) is bound by residues D242, E288, and D315. (2R)-2-phosphoglycerate is bound by residues K340, R369, S370, and K391. K340 (proton acceptor) is an active-site residue.

The protein belongs to the enolase family. The cofactor is Mg(2+).

The protein resides in the cytoplasm. It is found in the secreted. It localises to the cell surface. The enzyme catalyses (2R)-2-phosphoglycerate = phosphoenolpyruvate + H2O. The protein operates within carbohydrate degradation; glycolysis; pyruvate from D-glyceraldehyde 3-phosphate: step 4/5. In terms of biological role, catalyzes the reversible conversion of 2-phosphoglycerate (2-PG) into phosphoenolpyruvate (PEP). It is essential for the degradation of carbohydrates via glycolysis. This chain is Enolase, found in Bacillus cereus (strain G9842).